A 531-amino-acid chain; its full sequence is Methyl-accepting chemotaxis protein McpN (531 aa).

Topologically, residues 1–24 (MNESVARVFDRILRGLGLKTLNAQ) are cytoplasmic. The chain crosses the membrane as a helical span at residues 25 to 45 (FLLSYALMFGLAACASVALYL). Residues 46–174 (SMSISPETIN…LMSARADSVQ (129 aa)) are Periplasmic-facing. The interval 52 to 140 (ETINVAGAQR…AMLDQVAQPA (89 aa)) is pilJ-type. Positions 54-65 (INVAGAQRMLSQ) match the N-box motif. R61 lines the nitrate pocket. The helical transmembrane segment at 175-195 (HTQMWIAFGCLLAILVLVVLG) threads the bilayer. Over 196–531 (RQFGLAPLMR…LRVVLGRFRT (336 aa)) the chain is Cytoplasmic. An HAMP domain is found at 201 to 254 (APLMRQLRGLEVALTEVGAANFTHALAAGHADNEIGRIVAGYERMRQDVSGLLA). Residues 259-495 (SAAETDKDVA…DIDRNITNVS (237 aa)) enclose the Methyl-accepting transducer domain.

It belongs to the methyl-accepting chemotaxis (MCP) protein family. As to quaternary structure, ligand free ligand-binding domain (LBD) is present in a monomer-dimer equilibrium. Nitrate binding to the periplasmic LBD stabilizes the homodimer.

It localises to the cell inner membrane. Its function is as follows. Chemotactic-signal transducers respond to changes in the concentration of attractants and repellents in the environment, transduce a signal from the outside to the inside of the cell, and facilitate sensory adaptation through the variation of the level of methylation. McpN is a chemoreceptor that recognizes specifically nitrate and mediates chemoattraction. Binds nitrate specifically and shows no affinity for other ligands such as nitrite. McpN-mediated taxis occurs only under nitrate starvation conditions. The sequence is that of Methyl-accepting chemotaxis protein McpN from Pseudomonas aeruginosa (strain ATCC 15692 / DSM 22644 / CIP 104116 / JCM 14847 / LMG 12228 / 1C / PRS 101 / PAO1).